The primary structure comprises 351 residues: Photosystem II D2 protein (351 aa).

A helical transmembrane segment spans residues 39-59 (TAYLAAGGWFTGTTFVTSWYT). His116 is a binding site for chlorophyll a. A helical membrane pass occupies residues 123-139 (GFCLRQFEIARLVGIRP). Pheophytin a contacts are provided by Gln128 and Asn141. Residues 151-164 (VFVSVFLLYPLGQA) traverse the membrane as a helical segment. His196 lines the chlorophyll a pocket. The helical transmembrane segment at 206 to 226 (GALLCAIHGATVENTLFEDGD) threads the bilayer. Residues His213 and Phe260 each contribute to the a plastoquinone site. Position 213 (His213) interacts with Fe cation. A Fe cation-binding site is contributed by His267. The helical transmembrane segment at 277–293 (GLWTSSIGIVGLALNLR) threads the bilayer.

This sequence belongs to the reaction center PufL/M/PsbA/D family. In terms of assembly, PSII is composed of 1 copy each of membrane proteins PsbA, PsbB, PsbC, PsbD, PsbE, PsbF, PsbH, PsbI, PsbJ, PsbK, PsbL, PsbM, PsbT, PsbX, PsbY, PsbZ, Psb30/Ycf12, at least 3 peripheral proteins of the oxygen-evolving complex and a large number of cofactors. It forms dimeric complexes. It depends on The D1/D2 heterodimer binds P680, chlorophylls that are the primary electron donor of PSII, and subsequent electron acceptors. It shares a non-heme iron and each subunit binds pheophytin, quinone, additional chlorophylls, carotenoids and lipids. There is also a Cl(-1) ion associated with D1 and D2, which is required for oxygen evolution. The PSII complex binds additional chlorophylls, carotenoids and specific lipids. as a cofactor.

Its subcellular location is the plastid. The protein localises to the chloroplast thylakoid membrane. The enzyme catalyses 2 a plastoquinone + 4 hnu + 2 H2O = 2 a plastoquinol + O2. In terms of biological role, photosystem II (PSII) is a light-driven water:plastoquinone oxidoreductase that uses light energy to abstract electrons from H(2)O, generating O(2) and a proton gradient subsequently used for ATP formation. It consists of a core antenna complex that captures photons, and an electron transfer chain that converts photonic excitation into a charge separation. The D1/D2 (PsbA/PsbD) reaction center heterodimer binds P680, the primary electron donor of PSII as well as several subsequent electron acceptors. D2 is needed for assembly of a stable PSII complex. This is Photosystem II D2 protein from Thalassiosira pseudonana (Marine diatom).